Here is a 334-residue protein sequence, read N- to C-terminus: Cathepsin J (334 aa).

An N-terminal signal peptide occupies residues 1-17; it reads MTPAVFLVILCFGVASG. Residues 18 to 113 constitute a propeptide, activation peptide; that stretch reads APARDPNLDA…PSAQKQVSIG (96 aa). Residue cysteine 138 is part of the active site. Residues asparagine 217, asparagine 221, and asparagine 268 are each glycosylated (N-linked (GlcNAc...) asparagine). A disulfide bond links cysteine 269 and cysteine 322. Histidine 276 is an active-site residue. N-linked (GlcNAc...) asparagine glycosylation is present at asparagine 288. Residue asparagine 300 is part of the active site.

Belongs to the peptidase C1 family. In terms of tissue distribution, expressed specifically in placenta.

It is found in the lysosome. The polypeptide is Cathepsin J (Ctsj) (Rattus norvegicus (Rat)).